The sequence spans 360 residues: Peptide chain release factor 1 (360 aa).

Glutamine 235 carries the post-translational modification N5-methylglutamine. Residues 291-308 show a composition bias toward basic and acidic residues; that stretch reads ASERRNLLGTGDRSDRNR. Residues 291–312 are disordered; that stretch reads ASERRNLLGTGDRSDRNRTYNF.

This sequence belongs to the prokaryotic/mitochondrial release factor family. Methylated by PrmC. Methylation increases the termination efficiency of RF1.

The protein resides in the cytoplasm. Functionally, peptide chain release factor 1 directs the termination of translation in response to the peptide chain termination codons UAG and UAA. This Yersinia pseudotuberculosis serotype I (strain IP32953) protein is Peptide chain release factor 1.